We begin with the raw amino-acid sequence, 251 residues long: Triosephosphate isomerase (251 aa).

Substrate is bound at residue 9–11 (NWK). Catalysis depends on His-96, which acts as the Electrophile. Glu-168 acts as the Proton acceptor in catalysis. Substrate contacts are provided by residues Gly-174, Ser-214, and 235-236 (GG).

Belongs to the triosephosphate isomerase family. In terms of assembly, homodimer.

It is found in the cytoplasm. It catalyses the reaction D-glyceraldehyde 3-phosphate = dihydroxyacetone phosphate. Its pathway is carbohydrate biosynthesis; gluconeogenesis. The protein operates within carbohydrate degradation; glycolysis; D-glyceraldehyde 3-phosphate from glycerone phosphate: step 1/1. In terms of biological role, involved in the gluconeogenesis. Catalyzes stereospecifically the conversion of dihydroxyacetone phosphate (DHAP) to D-glyceraldehyde-3-phosphate (G3P). The protein is Triosephosphate isomerase of Porphyromonas gingivalis (strain ATCC 33277 / DSM 20709 / CIP 103683 / JCM 12257 / NCTC 11834 / 2561).